The primary structure comprises 189 residues: HGPRTase-like protein (189 aa).

It belongs to the purine/pyrimidine phosphoribosyltransferase family. Archaeal HPRT subfamily.

Functionally, may catalyze a purine salvage reaction, the substrate is unknown. This chain is HGPRTase-like protein, found in Halorubrum lacusprofundi (strain ATCC 49239 / DSM 5036 / JCM 8891 / ACAM 34).